The chain runs to 401 residues: UPF0242 protein CPn_0755/CP_1117/CPj0755/CpB0783 (401 aa).

Belongs to the UPF0242 family.

This chain is UPF0242 protein CPn_0755/CP_1117/CPj0755/CpB0783, found in Chlamydia pneumoniae (Chlamydophila pneumoniae).